The sequence spans 735 residues: Transcription factor sphG (735 aa).

Positions 13–40 form a DNA-binding region, zn(2)-C6 fungal-type; sequence CDQCRARKIRCSREKPSCRNCGRLGLQC. The disordered stretch occupies residues 89-110; it reads TISPSARCPASPASPSPRLSDK. Over residues 91–106 the composition is skewed to low complexity; that stretch reads SPSARCPASPASPSPR.

Its subcellular location is the nucleus. Functionally, transcription factor that regulates the expression of the gene cluster that mediates the biosynthesis of sphingofungins, bioactive molecules acting as sphingolipid inhibitors via inhibiting serine palmitoyl transferase (SPT). This Aspergillus fumigatus (strain CBS 144.89 / FGSC A1163 / CEA10) (Neosartorya fumigata) protein is Transcription factor sphG.